The following is a 1100-amino-acid chain: Exportin-T (1100 aa).

It belongs to the exportin family. Interacts with CEX1, GSP1, GSP2, NSP1, NUP2 and UTP8.

The protein localises to the nucleus. It localises to the cytoplasm. Functionally, tRNA nucleus export receptor which facilitates tRNA translocation across the nuclear pore complex. Preferentially interacts with tRNAs with mature 5'- and 3'-termini and does not distinguish between intron-containing and spliced tRNAs. In the nucleus binds to tRNA and to the Ran-GTPases GSP1 or GSP2 in their active GTP-bound form. Docking of this trimeric complex to the nuclear pore complex (NPC) is mediated through binding to nucleoporins. Upon transit of a nuclear export complex into the cytoplasm, disassembling of the complex and hydrolysis of Ran-GTP to Ran-GDP cause release of the tRNA from the export receptor. The directionality of nuclear export is thought to be conferred by an asymmetric distribution of the GTP- and GDP-bound forms of Ran between the cytoplasm and nucleus. This Saccharomyces cerevisiae (strain ATCC 204508 / S288c) (Baker's yeast) protein is Exportin-T (LOS1).